Consider the following 75-residue polypeptide: MAVEKFETALKKLEDVVKKLEGGELSLEESLKAFEEGVKFSAFCSKKLNEAERRVETLVKQRDGSFVTKPFEGEE.

Belongs to the XseB family. Heterooligomer composed of large and small subunits.

The protein resides in the cytoplasm. The catalysed reaction is Exonucleolytic cleavage in either 5'- to 3'- or 3'- to 5'-direction to yield nucleoside 5'-phosphates.. Bidirectionally degrades single-stranded DNA into large acid-insoluble oligonucleotides, which are then degraded further into small acid-soluble oligonucleotides. This chain is Exodeoxyribonuclease 7 small subunit, found in Geobacter sp. (strain M21).